We begin with the raw amino-acid sequence, 2188 residues long: Glutamate synthase 2 [NADH], chloroplastic (2188 aa).

The N-terminal 30 residues, 1–30, are a transit peptide targeting the chloroplast; the sequence is MSAAQGLALKLRAAPAAGGVRGEKRRRAAS. Disordered stretches follow at residues 14–40 and 61–94; these read APAA…ARPR and VAPR…PESS. Low complexity predominate over residues 65–80; sequence ASASRQAEAGAGAGAA. Cysteine 107 serves as the catalytic Nucleophile. Positions 107 to 511 constitute a Glutamine amidotransferase type-2 domain; it reads CGVGFIAELS…PGMMLLVDFE (405 aa). 1198-1255 is an FMN binding site; that stretch reads LAETHQTLVANGLRGRAVLQTDGQMKTGRDVAVACLLGAEEFGFSTAPLITLGCIMMR. [3Fe-4S] cluster-binding residues include cysteine 1251, cysteine 1257, and cysteine 1262. An NAD(+)-binding site is contributed by 1974-1988; the sequence is GGGDTGTDCIGTSIR.

It belongs to the glutamate synthase family. In terms of assembly, monomer. [3Fe-4S] cluster serves as cofactor. FAD is required as a cofactor. The cofactor is FMN. Expressed in leaf blades and sheaths.

It is found in the plastid. It localises to the chloroplast. The enzyme catalyses 2 L-glutamate + NAD(+) = L-glutamine + 2-oxoglutarate + NADH + H(+). It participates in amino-acid biosynthesis; L-glutamate biosynthesis via GLT pathway; L-glutamate from 2-oxoglutarate and L-glutamine (NAD(+) route): step 1/1. Its pathway is energy metabolism; nitrogen metabolism. In terms of biological role, involved in glutamate biosynthesis. This Oryza sativa subsp. japonica (Rice) protein is Glutamate synthase 2 [NADH], chloroplastic.